The chain runs to 118 residues: Small ribosomal subunit protein uS13 (118 aa).

Residues Ser94 to Lys118 are disordered.

This sequence belongs to the universal ribosomal protein uS13 family. As to quaternary structure, part of the 30S ribosomal subunit. Forms a loose heterodimer with protein S19. Forms two bridges to the 50S subunit in the 70S ribosome.

Located at the top of the head of the 30S subunit, it contacts several helices of the 16S rRNA. In the 70S ribosome it contacts the 23S rRNA (bridge B1a) and protein L5 of the 50S subunit (bridge B1b), connecting the 2 subunits; these bridges are implicated in subunit movement. Contacts the tRNAs in the A and P-sites. This chain is Small ribosomal subunit protein uS13, found in Vibrio vulnificus (strain CMCP6).